We begin with the raw amino-acid sequence, 244 residues long: Lactate utilization protein A (244 aa).

Belongs to the LutA/YkgE family.

Its function is as follows. Is involved in L-lactate degradation and allows cells to grow with lactate as the sole carbon source. The protein is Lactate utilization protein A of Oceanobacillus iheyensis (strain DSM 14371 / CIP 107618 / JCM 11309 / KCTC 3954 / HTE831).